The following is an 894-amino-acid chain: Protein SEY1 (894 aa).

The tract at residues 1-64 (MGLDVDSVPI…PRALEPAQVT (64 aa)) is disordered. Residues 1–768 (MGLDVDSVPI…KRGTVSSMSQ (768 aa)) lie on the Cytoplasmic side of the membrane. Low complexity predominate over residues 9–24 (PIAEAAAPSSMAATEP). Residues 40–53 (APMNTDSSRETMPT) are compositionally biased toward polar residues. The 223-residue stretch at 137 to 359 (GFGYDICAVL…DESYVFKTEY (223 aa)) folds into the GB1/RHD3-type G domain. Residue 147 to 154 (GSQSTGKS) coordinates GTP. A coiled-coil region spans residues 536–559 (KVDDERAQLLDELHTLARTLRANE). A helical membrane pass occupies residues 769-789 (VPIWMYGVLVVLGWNEAMAVL). Over 790–792 (RNP) the chain is Lumenal. The chain crosses the membrane as a helical span at residues 793–813 (VYFTLLCMVLATAYVIWRLNL). Residues 814 to 894 (GTPVLALASG…DSHPRLPASF (81 aa)) lie on the Cytoplasmic side of the membrane. Positions 841–894 (DGTPPSANRAREYRVPSGSTAHVSEKTPHRPLTTSGAAEADTVEDSHPRLPASF) are disordered.

Belongs to the TRAFAC class dynamin-like GTPase superfamily. GB1/RHD3 GTPase family. RHD3 subfamily.

Its subcellular location is the endoplasmic reticulum membrane. In terms of biological role, cooperates with the reticulon proteins and tubule-shaping DP1 family proteins to generate and maintain the structure of the tubular endoplasmic reticulum network. Has GTPase activity, which is required for its function in ER organization. This chain is Protein SEY1, found in Malassezia globosa (strain ATCC MYA-4612 / CBS 7966) (Dandruff-associated fungus).